The primary structure comprises 83 residues: Exodeoxyribonuclease 7 small subunit (83 aa).

It belongs to the XseB family. Heterooligomer composed of large and small subunits.

The protein localises to the cytoplasm. It carries out the reaction Exonucleolytic cleavage in either 5'- to 3'- or 3'- to 5'-direction to yield nucleoside 5'-phosphates.. Its function is as follows. Bidirectionally degrades single-stranded DNA into large acid-insoluble oligonucleotides, which are then degraded further into small acid-soluble oligonucleotides. The polypeptide is Exodeoxyribonuclease 7 small subunit (Novosphingobium aromaticivorans (strain ATCC 700278 / DSM 12444 / CCUG 56034 / CIP 105152 / NBRC 16084 / F199)).